A 298-amino-acid polypeptide reads, in one-letter code: Peroxisomal 2,4-dienoyl-CoA reductase [(3E)-enoyl-CoA-producing] (298 aa).

19–24 provides a ligand contact to NADP(+); it reads GGGSGI. Residue arginine 44 coordinates substrate. Aspartate 69 contributes to the NADP(+) binding site. Residues arginine 71, phenylalanine 101, and 109–111 each bind substrate; that span reads SPN. Residues lysine 173 and 200-206 each bind NADP(+); that span reads PGPIGGT. Residues 279–298 are disordered; sequence SRAVEKRSRAKPVGLPTSKL. Residues 296–298 carry the Microbody targeting signal motif; sequence SKL.

Belongs to the short-chain dehydrogenases/reductases (SDR) family. 2,4-dienoyl-CoA reductase subfamily.

The protein localises to the peroxisome. It catalyses the reaction a (2E,4Z)-dienoyl-CoA + NADPH + H(+) = a 4,5-saturated-(3E)-enoyl-CoA + NADP(+). It carries out the reaction a (2E,4E)-dienoyl-CoA + NADPH + H(+) = a 4,5-saturated-(3E)-enoyl-CoA + NADP(+). Its function is as follows. Auxiliary enzyme of beta-oxidation. Participates in the degradation of unsaturated fatty enoyl-CoA esters having double bonds in both even- and odd-numbered positions in peroxisome. Catalyzes the NADP-dependent reduction of 2,4-dienoyl-CoA to yield trans-3-enoyl-CoA. The sequence is that of Peroxisomal 2,4-dienoyl-CoA reductase [(3E)-enoyl-CoA-producing] from Arabidopsis thaliana (Mouse-ear cress).